The following is a 693-amino-acid chain: Elongation factor G (693 aa).

Positions 8-282 constitute a tr-type G domain; the sequence is EKFRNFGIMA…AVVDYLPSPI (275 aa). GTP contacts are provided by residues 17 to 24, 81 to 85, and 135 to 138; these read AHIDAGKT, DTPGH, and NKMD.

Belongs to the TRAFAC class translation factor GTPase superfamily. Classic translation factor GTPase family. EF-G/EF-2 subfamily.

It localises to the cytoplasm. Functionally, catalyzes the GTP-dependent ribosomal translocation step during translation elongation. During this step, the ribosome changes from the pre-translocational (PRE) to the post-translocational (POST) state as the newly formed A-site-bound peptidyl-tRNA and P-site-bound deacylated tRNA move to the P and E sites, respectively. Catalyzes the coordinated movement of the two tRNA molecules, the mRNA and conformational changes in the ribosome. This is Elongation factor G from Mycoplasmoides gallisepticum (strain R(low / passage 15 / clone 2)) (Mycoplasma gallisepticum).